Consider the following 382-residue polypeptide: Galactokinase (382 aa).

34 to 37 contacts substrate; it reads EHTD. Residue 124–130 coordinates ATP; the sequence is GAGLSSS. The Mg(2+) site is built by serine 130 and glutamate 162. The Proton acceptor role is filled by aspartate 174. Tyrosine 223 is a binding site for substrate.

The protein belongs to the GHMP kinase family. GalK subfamily.

Its subcellular location is the cytoplasm. The enzyme catalyses alpha-D-galactose + ATP = alpha-D-galactose 1-phosphate + ADP + H(+). It participates in carbohydrate metabolism; galactose metabolism. Catalyzes the transfer of the gamma-phosphate of ATP to D-galactose to form alpha-D-galactose-1-phosphate (Gal-1-P). The polypeptide is Galactokinase (Escherichia fergusonii (strain ATCC 35469 / DSM 13698 / CCUG 18766 / IAM 14443 / JCM 21226 / LMG 7866 / NBRC 102419 / NCTC 12128 / CDC 0568-73)).